A 540-amino-acid chain; its full sequence is Membrane protein insertase YidC (540 aa).

A helical membrane pass occupies residues 6 to 26 (NILLIALALVSFLLFQQWQVA). The segment at 36–63 (QAQSSSTLPAPSFADELDPVPGQQQASA) is disordered. The next 4 membrane-spanning stretches (helical) occupy residues 342–362 (AFIQ…TFIV), 417–437 (LGGC…YWAL), 455–475 (LSAQ…MFLI), and 496–516 (PVMF…YWLV).

This sequence belongs to the OXA1/ALB3/YidC family. Type 1 subfamily. As to quaternary structure, interacts with the Sec translocase complex via SecD. Specifically interacts with transmembrane segments of nascent integral membrane proteins during membrane integration.

The protein localises to the cell inner membrane. In terms of biological role, required for the insertion and/or proper folding and/or complex formation of integral membrane proteins into the membrane. Involved in integration of membrane proteins that insert both dependently and independently of the Sec translocase complex, as well as at least some lipoproteins. Aids folding of multispanning membrane proteins. This is Membrane protein insertase YidC from Vibrio campbellii (strain ATCC BAA-1116).